The sequence spans 312 residues: Malate dehydrogenase (312 aa).

Residues 7–13 (GAAGGIG) and Asp34 contribute to the NAD(+) site. Positions 81 and 87 each coordinate substrate. NAD(+) contacts are provided by residues Asn94 and 117–119 (ITN). 2 residues coordinate substrate: Asn119 and Arg153. The active-site Proton acceptor is the His177. Met227 is an NAD(+) binding site.

The protein belongs to the LDH/MDH superfamily. MDH type 1 family. Homodimer.

The enzyme catalyses (S)-malate + NAD(+) = oxaloacetate + NADH + H(+). In terms of biological role, catalyzes the reversible oxidation of malate to oxaloacetate. The chain is Malate dehydrogenase from Salmonella choleraesuis (strain SC-B67).